The chain runs to 541 residues: Glycogen synthase (541 aa).

Lys17 serves as a coordination point for ADP-alpha-D-glucose. The interval 497-541 (LARPASPPDTAPVGKPARRRRTTALSTTARAHPVARAAGREKIRA) is disordered.

Belongs to the glycosyltransferase 1 family. Bacterial/plant glycogen synthase subfamily.

It carries out the reaction [(1-&gt;4)-alpha-D-glucosyl](n) + ADP-alpha-D-glucose = [(1-&gt;4)-alpha-D-glucosyl](n+1) + ADP + H(+). Its pathway is glycan biosynthesis; glycogen biosynthesis. Functionally, synthesizes alpha-1,4-glucan chains using ADP-glucose. The polypeptide is Glycogen synthase (Ralstonia nicotianae (strain ATCC BAA-1114 / GMI1000) (Ralstonia solanacearum)).